A 671-amino-acid polypeptide reads, in one-letter code: UvrABC system protein B (671 aa).

Residues 35-423 enclose the Helicase ATP-binding domain; the sequence is KAIIENKKHQ…NHQVVQQIIR (389 aa). 48 to 55 contributes to the ATP binding site; it reads GATGTGKT. Residues 101-124 carry the Beta-hairpin motif; that stretch reads NFDFFQPEAYIPSKDLYIDKDSRQ. The region spanning 440 to 602 is the Helicase C-terminal domain; that stretch reads QIDDIINEIH…IVPKTISKAI (163 aa). Residues 632–667 enclose the UVR domain; that stretch reads QQTIDNLRQEMLQAAKELDFERAAILRDTIIELENE.

It belongs to the UvrB family. Forms a heterotetramer with UvrA during the search for lesions. Interacts with UvrC in an incision complex.

It is found in the cytoplasm. Its function is as follows. The UvrABC repair system catalyzes the recognition and processing of DNA lesions. A damage recognition complex composed of 2 UvrA and 2 UvrB subunits scans DNA for abnormalities. Upon binding of the UvrA(2)B(2) complex to a putative damaged site, the DNA wraps around one UvrB monomer. DNA wrap is dependent on ATP binding by UvrB and probably causes local melting of the DNA helix, facilitating insertion of UvrB beta-hairpin between the DNA strands. Then UvrB probes one DNA strand for the presence of a lesion. If a lesion is found the UvrA subunits dissociate and the UvrB-DNA preincision complex is formed. This complex is subsequently bound by UvrC and the second UvrB is released. If no lesion is found, the DNA wraps around the other UvrB subunit that will check the other stand for damage. The polypeptide is UvrABC system protein B (Mycoplasma mycoides subsp. mycoides SC (strain CCUG 32753 / NCTC 10114 / PG1)).